The sequence spans 471 residues: Microtubule-associated tyrosine carboxypeptidase 1 (471 aa).

Disordered stretches follow at residues 1 to 40 (MVLD…PLYP) and 76 to 116 (HMRR…LRPA). His-280 lines the Zn(2+) pocket. The active-site Nucleophile is Glu-281. His-285 and Glu-316 together coordinate Zn(2+).

It belongs to the peptidase MATCAP family. Zn(2+) is required as a cofactor.

The protein resides in the cytoplasm. The protein localises to the cytoskeleton. The enzyme catalyses C-terminal L-alpha-aminoacyl-L-glutamyl-L-glutamyl-L-tyrosyl-[tubulin] + H2O = C-terminal L-alpha-aminoacyl-L-glutamyl-L-glutamyl-[tubulin] + L-tyrosine. It carries out the reaction C-terminal L-alpha-aminoacyl-L-glutamyl-L-glutamyl-L-phenylalanyl-[tubulin] + H2O = C-terminal L-alpha-aminoacyl-L-glutamyl-L-glutamyl-[tubulin] + L-phenylalanine. In terms of biological role, tyrosine carboxypeptidase that removes the C-terminal tyrosine residue of alpha-tubulin, thereby regulating microtubule dynamics and function. Also able to remove the C-terminal phenylalanine residue of alpha-tubulin TUBA8. Recognizes adjacent tubulin dimers along the same protofilament. In Homo sapiens (Human), this protein is Microtubule-associated tyrosine carboxypeptidase 1.